A 198-amino-acid chain; its full sequence is Recombination protein RecR (198 aa).

A C4-type zinc finger spans residues 56–71; that stretch reads CHVCGNVDTGDPCGIC. The 96-residue stretch at 79 to 174 folds into the Toprim domain; sequence RMLCVVEEVA…RLTQLAHGLP (96 aa).

This sequence belongs to the RecR family.

May play a role in DNA repair. It seems to be involved in an RecBC-independent recombinational process of DNA repair. It may act with RecF and RecO. The protein is Recombination protein RecR of Rhizorhabdus wittichii (strain DSM 6014 / CCUG 31198 / JCM 15750 / NBRC 105917 / EY 4224 / RW1) (Sphingomonas wittichii).